We begin with the raw amino-acid sequence, 86 residues long: Large ribosomal subunit protein uL23 (86 aa).

The protein belongs to the universal ribosomal protein uL23 family. Part of the 50S ribosomal subunit. Contacts protein L29.

Functionally, binds to 23S rRNA. One of the proteins that surrounds the polypeptide exit tunnel on the outside of the ribosome. In Thermococcus gammatolerans (strain DSM 15229 / JCM 11827 / EJ3), this protein is Large ribosomal subunit protein uL23.